The following is a 273-amino-acid chain: Large ribosomal subunit protein uL2 (273 aa).

The disordered stretch occupies residues 228–273 (VDHPHGGGEGKTSGGRHPVTPWGFSTKGKKTRKNKRTSKFIVKKRK). A compositionally biased stretch (basic residues) spans 254–273 (KGKKTRKNKRTSKFIVKKRK).

This sequence belongs to the universal ribosomal protein uL2 family. As to quaternary structure, part of the 50S ribosomal subunit. Forms a bridge to the 30S subunit in the 70S ribosome.

One of the primary rRNA binding proteins. Required for association of the 30S and 50S subunits to form the 70S ribosome, for tRNA binding and peptide bond formation. It has been suggested to have peptidyltransferase activity; this is somewhat controversial. Makes several contacts with the 16S rRNA in the 70S ribosome. This chain is Large ribosomal subunit protein uL2, found in Rickettsia prowazekii (strain Madrid E).